The sequence spans 50 residues: uncharacterized protein (50 aa).

The protein localises to the mitochondrion. This is an uncharacterized protein from Saccharomyces cerevisiae (strain ATCC 204508 / S288c) (Baker's yeast).